A 390-amino-acid chain; its full sequence is 3-ketoacyl-CoA thiolase (390 aa).

The active-site Acyl-thioester intermediate is the Cys95. Residues His346 and Cys376 each act as proton acceptor in the active site.

Belongs to the thiolase-like superfamily. Thiolase family. Heterotetramer of two alpha chains (FadB) and two beta chains (FadA).

The protein localises to the cytoplasm. It carries out the reaction an acyl-CoA + acetyl-CoA = a 3-oxoacyl-CoA + CoA. It functions in the pathway lipid metabolism; fatty acid beta-oxidation. Catalyzes the final step of fatty acid oxidation in which acetyl-CoA is released and the CoA ester of a fatty acid two carbons shorter is formed. The protein is 3-ketoacyl-CoA thiolase of Acinetobacter baumannii (strain ATCC 17978 / DSM 105126 / CIP 53.77 / LMG 1025 / NCDC KC755 / 5377).